Here is a 942-residue protein sequence, read N- to C-terminus: Eukaryotic translation initiation factor 3 subunit A (942 aa).

The PCI domain maps to 320–494 (FKKYSSIILL…NTVTFFKDPF (175 aa)). 4 coiled-coil regions span residues 499-529 (KAAGTVEEEEEEEEEEGEEVEGEEAETGEEI), 588-669 (ITQT…KQRE), 705-734 (SKLSQDKSELEDRMTSSLQKLDHAERAYRK), and 821-912 (IEEV…RKAQ). Residues 502 to 546 (GTVEEEEEEEEEEGEEVEGEEAETGEEIVEEGEEHENEENKEPEP) form a disordered region. Over residues 504-538 (VEEEEEEEEEEGEEVEGEEAETGEEIVEEGEEHEN) the composition is skewed to acidic residues. Basic and acidic residues-rich tracts occupy residues 836–870 (RKAEIEAEEREERAKKQEETARKQKEMEEAAERKS) and 889–911 (RSAKLDEIARRQREIEQAAERKA). The segment at 836–942 (RKAEIEAEER…KMKLRRASKK (107 aa)) is disordered.

It belongs to the eIF-3 subunit A family. As to quaternary structure, component of the eukaryotic translation initiation factor 3 (eIF-3) complex.

The protein resides in the cytoplasm. In terms of biological role, RNA-binding component of the eukaryotic translation initiation factor 3 (eIF-3) complex, which is involved in protein synthesis of a specialized repertoire of mRNAs and, together with other initiation factors, stimulates binding of mRNA and methionyl-tRNAi to the 40S ribosome. The eIF-3 complex specifically targets and initiates translation of a subset of mRNAs involved in cell proliferation. This is Eukaryotic translation initiation factor 3 subunit A from Vanderwaltozyma polyspora (strain ATCC 22028 / DSM 70294 / BCRC 21397 / CBS 2163 / NBRC 10782 / NRRL Y-8283 / UCD 57-17) (Kluyveromyces polysporus).